Here is a 280-residue protein sequence, read N- to C-terminus: 4-deoxy-L-threo-5-hexosulose-uronate ketol-isomerase (280 aa).

The Zn(2+) site is built by histidine 198, histidine 200, glutamate 205, and histidine 247.

Belongs to the KduI family. It depends on Zn(2+) as a cofactor.

The protein localises to the cytoplasm. The enzyme catalyses 5-dehydro-4-deoxy-D-glucuronate = 3-deoxy-D-glycero-2,5-hexodiulosonate. Isomerase involved in ulvan degradation. Ulvan is the main polysaccharide component of the Ulvales (green seaweed) cell wall. It is composed of disaccharide building blocks comprising 3-sulfated rhamnose (Rha3S) linked to D-glucuronic acid (GlcA), L-iduronic acid (IduA), or D-xylose (Xyl). Catalyzes the isomerization of 5-dehydro-4-deoxy-D-glucuronate to 3-deoxy-D-glycero-2,5-hexodiulosonate. The polypeptide is 4-deoxy-L-threo-5-hexosulose-uronate ketol-isomerase (Formosa agariphila (strain DSM 15362 / KCTC 12365 / LMG 23005 / KMM 3901 / M-2Alg 35-1)).